The chain runs to 340 residues: Photosystem II protein D1 (340 aa).

3 helical membrane passes run 25 to 42 (YIGW…LATV), 114 to 129 (HFFL…EWEF), and 138 to 152 (WIFV…AAAA). Chlorophyll a is bound at residue histidine 114. Residue tryptophan 122 participates in pheophytin a binding. Positions 166 and 185 each coordinate [CaMn4O5] cluster. A helical membrane pass occupies residues 193–214 (FHILGVAGVFGGSLFSAMHGSL). Histidine 194 is a binding site for chlorophyll a. Residues histidine 211 and 260–261 (SF) each bind a quinone. Residue histidine 211 coordinates Fe cation. Histidine 268 provides a ligand contact to Fe cation. The chain crosses the membrane as a helical span at residues 270 to 284 (FLAAWPVIGIWITSL). Residues histidine 328, glutamate 329, aspartate 338, and alanine 340 each contribute to the [CaMn4O5] cluster site.

Belongs to the reaction center PufL/M/PsbA/D family. PSII is composed of 1 copy each of membrane proteins PsbA, PsbB, PsbC, PsbD, PsbE, PsbF, PsbH, PsbI, PsbJ, PsbK, PsbL, PsbM, PsbT, PsbX, PsbY, PsbZ, Psb30/Ycf12, at least 3 peripheral proteins of the oxygen-evolving complex and a large number of cofactors. It forms dimeric complexes. The D1/D2 heterodimer binds P680, chlorophylls that are the primary electron donor of PSII, and subsequent electron acceptors. It shares a non-heme iron and each subunit binds pheophytin, quinone, additional chlorophylls, carotenoids and lipids. D1 provides most of the ligands for the Mn4-Ca-O5 cluster of the oxygen-evolving complex (OEC). There is also a Cl(-1) ion associated with D1 and D2, which is required for oxygen evolution. The PSII complex binds additional chlorophylls, carotenoids and specific lipids. serves as cofactor. In terms of processing, tyr-157 forms a radical intermediate that is referred to as redox-active TyrZ, YZ or Y-Z.

The protein resides in the plastid. It is found in the chloroplast thylakoid membrane. It catalyses the reaction 2 a plastoquinone + 4 hnu + 2 H2O = 2 a plastoquinol + O2. Photosystem II (PSII) is a light-driven water:plastoquinone oxidoreductase that uses light energy to abstract electrons from H(2)O, generating O(2) and a proton gradient subsequently used for ATP formation. It consists of a core antenna complex that captures photons, and an electron transfer chain that converts photonic excitation into a charge separation. The D1/D2 (PsbA/PsbD) reaction center heterodimer binds P680, the primary electron donor of PSII as well as several subsequent electron acceptors. The chain is Photosystem II protein D1 from Amphidinium carterae (Dinoflagellate).